Here is a 236-residue protein sequence, read N- to C-terminus: Ubiquinone biosynthesis O-methyltransferase (236 aa).

Residues Arg-40, Gly-59, Asp-80, and Leu-124 each coordinate S-adenosyl-L-methionine.

The protein belongs to the methyltransferase superfamily. UbiG/COQ3 family.

It carries out the reaction a 3-demethylubiquinol + S-adenosyl-L-methionine = a ubiquinol + S-adenosyl-L-homocysteine + H(+). The enzyme catalyses a 3-(all-trans-polyprenyl)benzene-1,2-diol + S-adenosyl-L-methionine = a 2-methoxy-6-(all-trans-polyprenyl)phenol + S-adenosyl-L-homocysteine + H(+). It functions in the pathway cofactor biosynthesis; ubiquinone biosynthesis. In terms of biological role, O-methyltransferase that catalyzes the 2 O-methylation steps in the ubiquinone biosynthetic pathway. In Nitrosococcus oceani (strain ATCC 19707 / BCRC 17464 / JCM 30415 / NCIMB 11848 / C-107), this protein is Ubiquinone biosynthesis O-methyltransferase.